The following is a 384-amino-acid chain: N-acetylneuraminate epimerase (384 aa).

Positions 1–24 (MNMKTLLTYATLLSVTAFSHVVYA) are cleaved as a signal peptide. Kelch repeat units lie at residues 46–90 (KVYV…SVIG), 92–145 (YIYL…YSPD), 147–184 (RQIL…RIVD), 185–230 (DYMG…VIEG), 233–281 (VTLI…VAGA), 303–352 (QAFE…TTSE), and 354–383 (VLIV…VEVI). The Proton acceptor role is filled by Glu-239.

It belongs to the NanM family. As to quaternary structure, homodimer.

It is found in the periplasm. It carries out the reaction N-acetyl-alpha-neuraminate = N-acetyl-beta-neuraminate. Converts alpha-N-acetylneuranimic acid (Neu5Ac) to the beta-anomer, accelerating the equilibrium between the alpha- and beta-anomers. Probably facilitates sialidase-negative bacteria to compete successfully for limited amounts of extracellular Neu5Ac, which is likely taken up in the beta-anomer. In addition, the rapid removal of sialic acid from solution might be advantageous to the bacterium to damp down host responses. The sequence is that of N-acetylneuraminate epimerase from Vibrio cholerae serotype O1 (strain ATCC 39315 / El Tor Inaba N16961).